Reading from the N-terminus, the 105-residue chain is Small ribosomal subunit protein uS10 (105 aa).

Belongs to the universal ribosomal protein uS10 family. As to quaternary structure, part of the 30S ribosomal subunit.

Functionally, involved in the binding of tRNA to the ribosomes. The chain is Small ribosomal subunit protein uS10 from Maridesulfovibrio salexigens (strain ATCC 14822 / DSM 2638 / NCIMB 8403 / VKM B-1763) (Desulfovibrio salexigens).